Reading from the N-terminus, the 232-residue chain is Aprataxin-like protein (232 aa).

The region spanning 38 to 160 (LKVYIESPES…MTLDHVSPSL (123 aa)) is the HIT domain. Interaction with DNA stretches follow at residues 63-67 (DMFPK), 138-149 (HAGPSMNNLHLH), and 161-165 (KNSAH). His-147 serves as the catalytic Nucleophile. Positions 200 and 203 each coordinate Zn(2+). Residues 209 to 212 (RHFT) form an interaction with DNA region. Zn(2+)-binding residues include His-217 and Glu-221.

As to quaternary structure, monomer.

The protein localises to the nucleus. The protein resides in the cytoplasm. The enzyme catalyses a 5'-end adenosine-5'-diphospho-5'-2'-deoxyribonucleoside-DNA + H2O = a 5'-end 5'-phospho-2'-deoxyribonucleoside-DNA + AMP + 2 H(+). The catalysed reaction is a 5'-end adenosine-5'-diphospho-5'-ribonucleoside-2'-deoxyribonucleotide-DNA + H2O = a 5'-end 5'-phospho-ribonucleoside-2'-deoxyribonucleotide-DNA + AMP + 2 H(+). It catalyses the reaction a 3'-end 2'-deoxyribonucleotide-3'-diphospho-5'-guanosine-DNA + H2O = a 3'-end 2'-deoxyribonucleotide 3'-phosphate-DNA + GMP + 2 H(+). Its function is as follows. DNA-binding protein involved in single-strand DNA break repair, double-strand DNA break repair and base excision repair. Resolves abortive DNA ligation intermediates formed either at base excision sites, or when DNA ligases attempt to repair non-ligatable breaks induced by reactive oxygen species. Catalyzes the release of adenylate groups covalently linked to 5'-phosphate termini, resulting in the production of 5'-phosphate termini that can be efficiently rejoined. Likewise, catalyzes the release of 3'-linked guanosine (DNAppG) and inosine (DNAppI) from DNA, but has higher specific activity with 5'-linked adenosine (AppDNA). In Schizosaccharomyces pombe (strain 972 / ATCC 24843) (Fission yeast), this protein is Aprataxin-like protein (hnt3).